Here is a 162-residue protein sequence, read N- to C-terminus: Nucleotide-binding protein CHU_2278 (162 aa).

Belongs to the YajQ family.

Nucleotide-binding protein. The sequence is that of Nucleotide-binding protein CHU_2278 from Cytophaga hutchinsonii (strain ATCC 33406 / DSM 1761 / CIP 103989 / NBRC 15051 / NCIMB 9469 / D465).